A 371-amino-acid polypeptide reads, in one-letter code: Probable beta-1,4-xylosyltransferase GT43A (371 aa).

The Cytoplasmic portion of the chain corresponds to 1–19 (MGTAAVAAAERPKQRRSSH). A helical; Signal-anchor for type II membrane protein membrane pass occupies residues 20-42 (LWKKALLHFSLCFVMGFFTGFAP). Residues 43–371 (SSSSSWRAGS…TSTPKTHNRR (329 aa)) are Lumenal-facing. N-linked (GlcNAc...) asparagine glycans are attached at residues Asn176 and Asn299.

Belongs to the glycosyltransferase 43 family.

The protein localises to the golgi apparatus membrane. In terms of biological role, probable beta-1,4-xylosyltransferase involved in xylan biosynthesis in cell walls. The chain is Probable beta-1,4-xylosyltransferase GT43A from Oryza sativa subsp. japonica (Rice).